We begin with the raw amino-acid sequence, 376 residues long: Crh-like protein 4 (376 aa).

The N-terminal stretch at 1 to 21 is a signal peptide; it reads MFPKIFLTAATALLSAKSTFA. Residues 22–229 enclose the GH16 domain; sequence QTYSSCNPLF…WARGPTDYSN (208 aa). Residues C27 and C35 are joined by a disulfide bond. The Nucleophile role is filled by E119. The active-site Proton donor is E123. Chitin-binding residues include E123, K202, W206, and T217. S346 carries GPI-anchor amidated serine lipidation. The propeptide at 347–376 is removed in mature form; that stretch reads ASPINISRINPLLLCGPFTFFFFAAIRRWP. N351 is a glycosylation site (N-linked (GlcNAc...) asparagine).

This sequence belongs to the glycosyl hydrolase 16 family. CRH1 subfamily.

It localises to the cell membrane. The enzyme catalyses Random endo-hydrolysis of N-acetyl-beta-D-glucosaminide (1-&gt;4)-beta-linkages in chitin and chitodextrins.. Dual chitinase/transglycosylase that plays a role in cell wall architecture. Chitinase and transglycosylase activities are coupled. Required for the polysaccharide cross-linking at the septa and the cell wall. More specifically, transfers chitin to 1,6-beta-glucan in the cell wall. This is Crh-like protein 4 from Botryotinia fuckeliana (strain B05.10) (Noble rot fungus).